The primary structure comprises 343 residues: D-erythrose-4-phosphate dehydrogenase (343 aa).

12-13 (RI) lines the NAD(+) pocket. Residues 154-156 (SCT), Arg200, 213-214 (TK), and Arg236 contribute to the substrate site. Cys155 serves as the catalytic Nucleophile. Asn318 lines the NAD(+) pocket.

The protein belongs to the glyceraldehyde-3-phosphate dehydrogenase family. Epd subfamily. As to quaternary structure, homotetramer.

Its subcellular location is the cytoplasm. The catalysed reaction is D-erythrose 4-phosphate + NAD(+) + H2O = 4-phospho-D-erythronate + NADH + 2 H(+). It functions in the pathway cofactor biosynthesis; pyridoxine 5'-phosphate biosynthesis; pyridoxine 5'-phosphate from D-erythrose 4-phosphate: step 1/5. Catalyzes the NAD-dependent conversion of D-erythrose 4-phosphate to 4-phosphoerythronate. This Pseudoalteromonas translucida (strain TAC 125) protein is D-erythrose-4-phosphate dehydrogenase.